Consider the following 468-residue polypeptide: MSKGTLFDKVWDAHTVQILPSGQTQLFIGLHLIHEVTSPQAFAMLRERGLKVLYPDRTVATVDHIVPTENQARPFADYLAEEMMQALEKNAQDNGIRFCHIGSGDQGIVHVIAPEQGLTQPGMTIACGDSHTSTHGAFGAIAFGIGTSQVRDVLASQTLALAKLKVRKIEVNGTLAPGVYAKDVILHIIRKLGVKGGVGYAYEYAGTTFEAMSMEERMTVCNMAIEGGARCGYINPDQVTFDYLKGRDFAPTGENWDKAVEWWQSIRSDADAEYDDVIVFDAKDIEPTVTWGITPGQGIGVSEVIPIPDSLPESDRAIAKEAYEYMQLSPGAPIKGTKVDVCFIGSCTNGRISDLREAAKFAQGHHVSPGVKAFVVPGSERVKVQAEAEGLDKIFVEAGFEWREAGCSMCLAMNPDKLQGDQISASSSNRNFKGRQGSSTGRTLLMSPAMVVAAAINGQVSDVRELVS.

The [4Fe-4S] cluster site is built by Cys347, Cys407, and Cys410.

It belongs to the aconitase/IPM isomerase family. LeuC type 1 subfamily. Heterodimer of LeuC and LeuD. [4Fe-4S] cluster is required as a cofactor.

The catalysed reaction is (2R,3S)-3-isopropylmalate = (2S)-2-isopropylmalate. It functions in the pathway amino-acid biosynthesis; L-leucine biosynthesis; L-leucine from 3-methyl-2-oxobutanoate: step 2/4. Its function is as follows. Catalyzes the isomerization between 2-isopropylmalate and 3-isopropylmalate, via the formation of 2-isopropylmaleate. This is 3-isopropylmalate dehydratase large subunit from Rippkaea orientalis (strain PCC 8801 / RF-1) (Cyanothece sp. (strain PCC 8801)).